Here is a 236-residue protein sequence, read N- to C-terminus: Small ribosomal subunit protein uS2c (236 aa).

This sequence belongs to the universal ribosomal protein uS2 family.

The protein resides in the plastid. The protein localises to the chloroplast. The chain is Small ribosomal subunit protein uS2c (rps2) from Oenothera parviflora (Small-flowered evening primrose).